The primary structure comprises 166 residues: uncharacterized protein (166 aa).

4 helical membrane-spanning segments follow: residues 7–27, 30–50, 69–89, and 92–112; these read VLFKISFLLIILVSLILSLFY, FLFAFLLSFILFGITWAYCYI, IETLRFLFILMIISVFIKSLL, and NSFFPYISFLLSNLILGLVLF.

To M.jannaschii MJ0795.1 and MJ0785.1.

Its subcellular location is the cell membrane. This is an uncharacterized protein from Methanocaldococcus jannaschii (strain ATCC 43067 / DSM 2661 / JAL-1 / JCM 10045 / NBRC 100440) (Methanococcus jannaschii).